The sequence spans 333 residues: GTP 3',8-cyclase (333 aa).

The Radical SAM core domain occupies 7-221 (KFGRVHDYIR…FEACDAIGFE (215 aa)). Arginine 16 lines the GTP pocket. Positions 23 and 27 each coordinate [4Fe-4S] cluster. Tyrosine 29 is an S-adenosyl-L-methionine binding site. Position 30 (cysteine 30) interacts with [4Fe-4S] cluster. Arginine 66 serves as a coordination point for GTP. Position 70 (glycine 70) interacts with S-adenosyl-L-methionine. GTP is bound at residue threonine 97. Serine 121 is an S-adenosyl-L-methionine binding site. Lysine 158 provides a ligand contact to GTP. S-adenosyl-L-methionine is bound at residue methionine 192. Residues cysteine 257 and cysteine 260 each coordinate [4Fe-4S] cluster. 262–264 (RLR) serves as a coordination point for GTP. Residue cysteine 274 coordinates [4Fe-4S] cluster.

It belongs to the radical SAM superfamily. MoaA family. Monomer and homodimer. The cofactor is [4Fe-4S] cluster.

The enzyme catalyses GTP + AH2 + S-adenosyl-L-methionine = (8S)-3',8-cyclo-7,8-dihydroguanosine 5'-triphosphate + 5'-deoxyadenosine + L-methionine + A + H(+). Its pathway is cofactor biosynthesis; molybdopterin biosynthesis. Catalyzes the cyclization of GTP to (8S)-3',8-cyclo-7,8-dihydroguanosine 5'-triphosphate. This chain is GTP 3',8-cyclase, found in Listeria welshimeri serovar 6b (strain ATCC 35897 / DSM 20650 / CCUG 15529 / CIP 8149 / NCTC 11857 / SLCC 5334 / V8).